The following is a 407-amino-acid chain: Probable tRNA sulfurtransferase (407 aa).

Positions 61 to 165 (NEIIQRLSKV…MDAIYIYEKV (105 aa)) constitute a THUMP domain. Residues 183–184 (ML), 208–209 (HF), R265, G287, and Q296 contribute to the ATP site.

The protein belongs to the ThiI family.

Its subcellular location is the cytoplasm. The catalysed reaction is [ThiI sulfur-carrier protein]-S-sulfanyl-L-cysteine + a uridine in tRNA + 2 reduced [2Fe-2S]-[ferredoxin] + ATP + H(+) = [ThiI sulfur-carrier protein]-L-cysteine + a 4-thiouridine in tRNA + 2 oxidized [2Fe-2S]-[ferredoxin] + AMP + diphosphate. It catalyses the reaction [ThiS sulfur-carrier protein]-C-terminal Gly-Gly-AMP + S-sulfanyl-L-cysteinyl-[cysteine desulfurase] + AH2 = [ThiS sulfur-carrier protein]-C-terminal-Gly-aminoethanethioate + L-cysteinyl-[cysteine desulfurase] + A + AMP + 2 H(+). Its pathway is cofactor biosynthesis; thiamine diphosphate biosynthesis. In terms of biological role, catalyzes the ATP-dependent transfer of a sulfur to tRNA to produce 4-thiouridine in position 8 of tRNAs, which functions as a near-UV photosensor. Also catalyzes the transfer of sulfur to the sulfur carrier protein ThiS, forming ThiS-thiocarboxylate. This is a step in the synthesis of thiazole, in the thiamine biosynthesis pathway. The sulfur is donated as persulfide by IscS. The polypeptide is Probable tRNA sulfurtransferase (Staphylococcus epidermidis (strain ATCC 35984 / DSM 28319 / BCRC 17069 / CCUG 31568 / BM 3577 / RP62A)).